The following is a 312-amino-acid chain: Aspartate carbamoyltransferase catalytic subunit (312 aa).

The carbamoyl phosphate site is built by arginine 58 and threonine 59. Lysine 86 is an L-aspartate binding site. Carbamoyl phosphate contacts are provided by arginine 108, histidine 136, and glutamine 139. The L-aspartate site is built by arginine 169 and arginine 223. Carbamoyl phosphate-binding residues include glycine 264 and proline 265.

The protein belongs to the aspartate/ornithine carbamoyltransferase superfamily. ATCase family. As to quaternary structure, heterododecamer (2C3:3R2) of six catalytic PyrB chains organized as two trimers (C3), and six regulatory PyrI chains organized as three dimers (R2).

The catalysed reaction is carbamoyl phosphate + L-aspartate = N-carbamoyl-L-aspartate + phosphate + H(+). It functions in the pathway pyrimidine metabolism; UMP biosynthesis via de novo pathway; (S)-dihydroorotate from bicarbonate: step 2/3. Its function is as follows. Catalyzes the condensation of carbamoyl phosphate and aspartate to form carbamoyl aspartate and inorganic phosphate, the committed step in the de novo pyrimidine nucleotide biosynthesis pathway. This is Aspartate carbamoyltransferase catalytic subunit from Syntrophomonas wolfei subsp. wolfei (strain DSM 2245B / Goettingen).